The chain runs to 1345 residues: Aldehyde oxidase 2 (1345 aa).

The 88-residue stretch at 9–96 (DELEFFVNGK…GAAVTTVEGV (88 aa)) folds into the 2Fe-2S ferredoxin-type domain. C48, C53, C56, and C78 together coordinate [2Fe-2S] cluster. Mo-molybdopterin is bound at residue Q117. The [2Fe-2S] cluster site is built by C118, C121, C153, and C155. C155 provides a ligand contact to Mo-molybdopterin. The FAD-binding PCMH-type domain occupies 238 to 423 (FYGERITWIA…GSVYIPHSQK (186 aa)). FAD is bound by residues 266 to 273 (LISGNTAL), A347, S356, H360, D369, and L413. Mo-molybdopterin contacts are provided by residues 812 to 813 (GF), 1094 to 1097 (ASVG), Q1209, and L1274. The active-site Proton acceptor; for azaheterocycle hydroxylase activity is E1276.

This sequence belongs to the xanthine dehydrogenase family. In terms of assembly, homodimer. [2Fe-2S] cluster is required as a cofactor. The cofactor is FAD. It depends on Mo-molybdopterin as a cofactor.

The protein localises to the cytoplasm. The catalysed reaction is an aldehyde + O2 + H2O = a carboxylate + H2O2 + H(+). In terms of biological role, oxidase with broad substrate specificity, oxidizing aromatic azaheterocycles, such as phthalazine, as well as aldehydes, such as benzaldehyde and retinal. This Rattus norvegicus (Rat) protein is Aldehyde oxidase 2 (Aox2).